The sequence spans 256 residues: uncharacterized protein (256 aa).

Transmembrane regions (helical) follow at residues 155-175 (ITGM…GLWL) and 203-223 (ITTT…YLLI).

Its subcellular location is the cell membrane. This is an uncharacterized protein from Mycobacterium bovis (strain ATCC BAA-935 / AF2122/97).